The chain runs to 155 residues: Transcriptional repressor NrdR (155 aa).

The segment covering 1–11 (MECPNCHQNAS) has biased composition (polar residues). Positions 1-22 (MECPNCHQNASRVIDSRPSDEN) are disordered. The segment at 3–34 (CPNCHQNASRVIDSRPSDENRAIRRRRECENC) is a zinc-finger region. Positions 49 to 139 (LLVVKNDGTR…IYREFKDMSS (91 aa)) constitute an ATP-cone domain.

It belongs to the NrdR family. The cofactor is Zn(2+).

Its function is as follows. Negatively regulates transcription of bacterial ribonucleotide reductase nrd genes and operons by binding to NrdR-boxes. The sequence is that of Transcriptional repressor NrdR from Lactobacillus acidophilus (strain ATCC 700396 / NCK56 / N2 / NCFM).